The primary structure comprises 428 residues: Light-independent protochlorophyllide reductase subunit N (428 aa).

The [4Fe-4S] cluster site is built by Cys29, Cys54, and Cys115.

The protein belongs to the BchN/ChlN family. Protochlorophyllide reductase is composed of three subunits; BchL, BchN and BchB. Forms a heterotetramer of two BchB and two BchN subunits. [4Fe-4S] cluster is required as a cofactor.

The enzyme catalyses chlorophyllide a + oxidized 2[4Fe-4S]-[ferredoxin] + 2 ADP + 2 phosphate = protochlorophyllide a + reduced 2[4Fe-4S]-[ferredoxin] + 2 ATP + 2 H2O. Its pathway is porphyrin-containing compound metabolism; bacteriochlorophyll biosynthesis (light-independent). In terms of biological role, component of the dark-operative protochlorophyllide reductase (DPOR) that uses Mg-ATP and reduced ferredoxin to reduce ring D of protochlorophyllide (Pchlide) to form chlorophyllide a (Chlide). This reaction is light-independent. The NB-protein (BchN-BchB) is the catalytic component of the complex. The sequence is that of Light-independent protochlorophyllide reductase subunit N from Roseobacter denitrificans (strain ATCC 33942 / OCh 114) (Erythrobacter sp. (strain OCh 114)).